The chain runs to 90 residues: Beta-microseminoprotein (90 aa).

Intrachain disulfides connect C2–C16, C34–C70, C37–C46, C39–C47, and C61–C84. V90 is subject to Valine amide.

This sequence belongs to the beta-microseminoprotein family.

Its subcellular location is the secreted. The chain is Beta-microseminoprotein (MSMB) from Struthio camelus (Common ostrich).